The primary structure comprises 194 residues: CASP-like protein Ni6 (194 aa).

Residues 1 to 27 (MSSMETEKGAVPTPQAPPVAPTDNKYR) are Cytoplasmic-facing. Residues 28–48 (VVDVILRVLLLAASIASVVLM) form a helical membrane-spanning segment. At 49-75 (VTSKQTEIIVSPFGSRPNAAKFQNSPA) the chain is on the extracellular side. Residues 76 to 96 (FIYLVAALSVAGLYSIITALV) form a helical membrane-spanning segment. The Cytoplasmic segment spans residues 97–109 (SLSYMRKPIVPPK). The helical transmembrane segment at 110-130 (LFWILLIHDVLLLGIVAAATG) threads the bilayer. The Extracellular segment spans residues 131-161 (TAGGVGYIGLKGNTHVRWGKIRNVYDKFCRH). A helical transmembrane segment spans residues 162–182 (VGASIIVSLFAAAVLVLLVFV). At 183–194 (NANSLYRRIPKY) the chain is on the cytoplasmic side.

The protein belongs to the Casparian strip membrane proteins (CASP) family. Homodimer and heterodimers.

The protein resides in the cell membrane. This chain is CASP-like protein Ni6 (Ni6), found in Beta vulgaris subsp. maritima (Sea beet).